Here is a 63-residue protein sequence, read N- to C-terminus: Metallothionein-1 (63 aa).

Repeats lie at residues 23–30 (CGDKCECK) and 56–63 (CGDKCECK).

This sequence belongs to the metallothionein superfamily. Type 9 family.

The metallothioneins are involved in the cellular sequestration of toxic metal ions. This Candida glabrata (strain ATCC 2001 / BCRC 20586 / JCM 3761 / NBRC 0622 / NRRL Y-65 / CBS 138) (Yeast) protein is Metallothionein-1 (MT-I).